The chain runs to 21 residues: Protein YliM (21 aa).

The polypeptide is Protein YliM (Escherichia coli (strain K12)).